An 873-amino-acid chain; its full sequence is MNDAECLSHLLQVCARKTEEFVRTLDSKHMVWLLEIEEEARKMFSSDFNAEPELMPKTPSQKRRRKKRTSILPDENRDPSGRRISRRQSNASWSSSVRRLSVRNQNKANDDSIQEEPAQLKRMTRARAQASIKSTPVLETALPESPSQICQKNAQVKISEQERRSAEQKLIESDFELKTVPEITKDNVSETVNSAVPAVPVTPENKSRAAGKLKIAASSTPEQKAEMVDLTCESPRPANEQQLNLSNQSATPTGSKSDRRSVRRSLVVRKSSSRRASLASQFSLASKRESMTREAVRKSIRQSISQKKAAMEISSTSSQRSYQSSIEMVDDEITIKIRPETVPSETVSEEAPAAESPRRSLRSRAFKKIAISNLPDSEEPPRKVTRQMVAGNAEPTPETTEDAQNIRRKSYKRAVDELSDDERPSEEERSPPRKKTPSPPCPPSKIVRPPPHMKSFLHTVQKNQLLMMTPGSIGKNIIMKSFIKRNTPLKTDPKTEEKERQRLDALRKKEEAELQRKQKIEEGKKRKQEELKVRREERLRKVLQARERVEQLEEEKKKKIEQKFAQIDEKSEKVREDRMAEEKAKKKMTAKKQEEVECRRKQEEEARRLKVKQMEEEERRHQELLQKKREEEELERQKKIAEAKRLAEQERERQLLAEKERLRAEREKERIEKEKALQLQRELERAAQEKEQQRREAEERKKREQQERLEQERLRKEQEAKRLQEEEQRKAKEQAAVAASAPVMNVTVDMQNSPACESYEMTPKSCKVPSVKVNEDNYGMDLNSDDSTDDESQPRKPIPAWASGNLLTQAIRQQYYKPIDVDRMYGTIDSPKLEELFNKSKPRYFKRTSSAVWHSPPLSSNRHHLAVGYGLKY.

7 disordered regions span residues 50–124, 237–270, 282–452, 484–535, 566–649, 683–736, and 781–800; these read AEPE…KRMT, PANE…VVRK, FSLA…PPPH, KRNT…KVRR, QIDE…LAEQ, LERA…EQAA, and DLNS…PIPA. Residues 60–69 are compositionally biased toward basic residues; the sequence is SQKRRRKKRT. Residues 87–105 are compositionally biased toward low complexity; it reads RQSNASWSSSVRRLSVRNQ. The span at 239-254 shows a compositional bias: polar residues; it reads NEQQLNLSNQSATPTG. A compositionally biased stretch (basic residues) spans 261–270; the sequence is SVRRSLVVRK. A compositionally biased stretch (basic and acidic residues) spans 286-297; that stretch reads SKRESMTREAVR. The span at 314-325 shows a compositional bias: low complexity; that stretch reads SSTSSQRSYQSS. Over residues 437–452 the composition is skewed to pro residues; that stretch reads PSPPCPPSKIVRPPPH. 4 stretches are compositionally biased toward basic and acidic residues: residues 491 to 535, 566 to 584, 591 to 649, and 683 to 733; these read TDPK…KVRR, QIDE…EEKA, KKQE…LAEQ, and LERA…KAKE. An SAH region spans residues 494–707; it reads KTEEKERQRL…EERKKREQQE (214 aa). Residues 782–856 form an IN box region; sequence LNSDDSTDDE…RTSSAVWHSP (75 aa). S849 and S850 each carry phosphoserine.

Belongs to the INCENP family. As to quaternary structure, component of the CPC composed of survivin/birc5, incenp, cdca8/borealin and/or cdca9/dasra-A, and aurkb/aurora-B. Interacts (via C-terminus) with aurkb (via N-terminus and kinase domain). Interacts (via N-terminus) with birc5.1, birc5.2, cdca8 and cdca9. Interacts with mtus1.

Its subcellular location is the nucleus. It localises to the chromosome. The protein resides in the centromere. It is found in the cytoplasm. The protein localises to the cytoskeleton. Its subcellular location is the spindle. It localises to the midbody. The protein resides in the kinetochore. Its function is as follows. Component of the chromosomal passenger complex (CPC), a complex that acts as a key regulator of mitosis. The CPC complex has essential functions at the centromere in ensuring correct chromosome alignment and segregation and is required for chromatin-induced microtubule stabilization and spindle assembly. Acts as a scaffold regulating CPC localization and activity. The C-terminus associates with aurkb/aurora-B, the N-terminus associated with cdca8/borealin and/or cdca9/dasra-A tethers the CPC to the inner centromere, and the microtubule binding activity within the central SAH domain directs aurkb/aurora-B toward substrates near microtubules. Activates aurkb. The sequence is that of Inner centromere protein A (incenp-a) from Xenopus laevis (African clawed frog).